The chain runs to 378 residues: Protein RecA (378 aa).

79-86 (GPESSGKT) lines the ATP pocket.

Belongs to the RecA family.

It is found in the cytoplasm. Its function is as follows. Can catalyze the hydrolysis of ATP in the presence of single-stranded DNA, the ATP-dependent uptake of single-stranded DNA by duplex DNA, and the ATP-dependent hybridization of homologous single-stranded DNAs. It interacts with LexA causing its activation and leading to its autocatalytic cleavage. The chain is Protein RecA from Streptococcus pyogenes serotype M49 (strain NZ131).